A 984-amino-acid chain; its full sequence is Ephrin type-A receptor 3 (984 aa).

An N-terminal signal peptide occupies residues Met-1–Arg-20. The Extracellular segment spans residues Glu-21–His-541. The 179-residue stretch at Glu-29–Lys-207 folds into the Eph LBD domain. Residues Asn-232, Asn-337, Asn-391, Asn-404, and Asn-493 are each glycosylated (N-linked (GlcNAc...) asparagine). Fibronectin type-III domains are found at residues Pro-325 to Ala-435 and Ala-436 to Ser-532. The helical transmembrane segment at Val-542–Gly-565 threads the bilayer. Over Arg-566–Val-984 the chain is Cytoplasmic. 2 positions are modified to phosphotyrosine; by autocatalysis: Tyr-597 and Tyr-603. Positions Ile-622–Ile-883 constitute a Protein kinase domain. ATP is bound by residues Gly-629–Gly-634, Lys-654, and Glu-701–Ser-707. Position 702 is a phosphotyrosine; by autocatalysis (Tyr-702). Asp-747 functions as the Proton acceptor in the catalytic mechanism. Arg-751–Asn-752 contributes to the ATP binding site. Tyr-780 carries the phosphotyrosine; by autocatalysis modification. The SAM domain maps to Ala-912–Gln-976. Tyr-938 is modified (phosphotyrosine). The PDZ-binding signature appears at Val-982 to Val-984.

It belongs to the protein kinase superfamily. Tyr protein kinase family. Ephrin receptor subfamily. As to quaternary structure, heterotetramer upon binding of the ligand. The heterotetramer is composed of an ephrin dimer and a receptor dimer. Oligomerization is probably required to induce biological responses. Forms a ternary EFNA5-EPHA3-ADAM10 complex mediating EFNA5 extracellular domain shedding by ADAM10 which regulates the EFNA5-EPHA3 complex internalization and function. Interacts (phosphorylated) with PTPN1; dephosphorylates EPHA3 and may regulate its trafficking and function. Interacts (phosphorylated) with CRK; mediates EFNA5-EPHA3 signaling through RHOA GTPase activation. Interacts with NCK1 (via SH2 domain); mediates EFNA5-EPHA3 signaling. Autophosphorylates upon activation by EFNA5. Phosphorylation on Tyr-603 mediates interaction with NCK1. Dephosphorylated by PTPN1. Most abundant in the heart, brain and lung.

It localises to the cell membrane. It catalyses the reaction L-tyrosyl-[protein] + ATP = O-phospho-L-tyrosyl-[protein] + ADP + H(+). Receptor tyrosine kinase which binds promiscuously membrane-bound ephrin family ligands residing on adjacent cells, leading to contact-dependent bidirectional signaling into neighboring cells. The signaling pathway downstream of the receptor is referred to as forward signaling while the signaling pathway downstream of the ephrin ligand is referred to as reverse signaling. Highly promiscuous for ephrin-A ligands it binds preferentially EFNA5. Upon activation by EFNA5 regulates cell-cell adhesion, cytoskeletal organization and cell migration. Plays a role in cardiac cells migration and differentiation and regulates the formation of the atrioventricular canal and septum during development probably through activation by EFNA1. Involved in the retinotectal mapping of neurons. May also control the segregation but not the guidance of motor and sensory axons during neuromuscular circuit development. The sequence is that of Ephrin type-A receptor 3 (Epha3) from Rattus norvegicus (Rat).